Reading from the N-terminus, the 797-residue chain is Protocadherin beta-9 (797 aa).

Residues 1–26 form the signal peptide; sequence MKTRGFSFPRQRQVLFLFLFWGVSLA. Over 27 to 690 the chain is Extracellular; the sequence is GSGFGRYSVT…AQADSLTVYL (664 aa). Cadherin domains are found at residues 35-133, 138-242, 247-347, 352-451, and 456-561; these read VTEE…SPVF, MVLK…APQF, YETQ…PPEL, LSNS…APAF, and YTLF…SPFV. A glycan (N-linked (GlcNAc...) asparagine) is linked at N169. An N-linked (GlcNAc...) asparagine glycan is attached at N418. N567 carries N-linked (GlcNAc...) asparagine glycosylation. One can recognise a Cadherin 6 domain in the interval 568–671; it reads GSAPCTELVP…LVDGFSQPYL (104 aa). A helical membrane pass occupies residues 691-711; that stretch reads VVALASVSSLFLLSVLLFVAV. The Cytoplasmic portion of the chain corresponds to 712–797; sequence RLCRRSRAAS…TLHNSFGFNY (86 aa).

It localises to the cell membrane. In terms of biological role, potential calcium-dependent cell-adhesion protein. May be involved in the establishment and maintenance of specific neuronal connections in the brain. This chain is Protocadherin beta-9 (PCDHB9), found in Pan troglodytes (Chimpanzee).